We begin with the raw amino-acid sequence, 231 residues long: Small ribosomal subunit protein uS3 (231 aa).

A KH type-2 domain is found at 39 to 107; it reads IRKYIVENLP…DVKLNIVEIR (69 aa).

The protein belongs to the universal ribosomal protein uS3 family. In terms of assembly, part of the 30S ribosomal subunit. Forms a tight complex with proteins S10 and S14.

Functionally, binds the lower part of the 30S subunit head. Binds mRNA in the 70S ribosome, positioning it for translation. The chain is Small ribosomal subunit protein uS3 from Novosphingobium aromaticivorans (strain ATCC 700278 / DSM 12444 / CCUG 56034 / CIP 105152 / NBRC 16084 / F199).